A 437-amino-acid chain; its full sequence is UDP-N-acetylmuramoylalanine--D-glutamate ligase (437 aa).

Gly-112–Thr-118 is a binding site for ATP.

Belongs to the MurCDEF family.

Its subcellular location is the cytoplasm. The enzyme catalyses UDP-N-acetyl-alpha-D-muramoyl-L-alanine + D-glutamate + ATP = UDP-N-acetyl-alpha-D-muramoyl-L-alanyl-D-glutamate + ADP + phosphate + H(+). It participates in cell wall biogenesis; peptidoglycan biosynthesis. Its function is as follows. Cell wall formation. Catalyzes the addition of glutamate to the nucleotide precursor UDP-N-acetylmuramoyl-L-alanine (UMA). This Haemophilus influenzae (strain ATCC 51907 / DSM 11121 / KW20 / Rd) protein is UDP-N-acetylmuramoylalanine--D-glutamate ligase (murD).